A 162-amino-acid chain; its full sequence is uncharacterized protein (162 aa).

Over residues 65 to 76 the composition is skewed to basic and acidic residues; sequence EEKPLEVAQDRN. Residues 65-93 form a disordered region; that stretch reads EEKPLEVAQDRNNKRKAPSHLEPAHDFIS.

This is an uncharacterized protein from Bacillus subtilis (strain 168).